The sequence spans 90 residues: C-C motif chemokine 4 homolog (90 aa).

The first 21 residues, 1–21 (MKVSVAALAVLLIAICYQTSA), serve as a signal peptide directing secretion. Intrachain disulfides connect Cys-32–Cys-56 and Cys-33–Cys-72.

Belongs to the intercrine beta (chemokine CC) family. As to quaternary structure, homodimer.

It is found in the secreted. Its function is as follows. Monokine with inflammatory and chemokinetic properties. The polypeptide is C-C motif chemokine 4 homolog (CCL4) (Gallus gallus (Chicken)).